We begin with the raw amino-acid sequence, 532 residues long: Purple acid phosphatase 15 (532 aa).

Positions 1 to 19 (MTFLLLLLFCFLSPAISSA) are cleaved as a signal peptide. N-linked (GlcNAc...) asparagine glycosylation is present at Asn136. Fe cation is bound at residue Asp194. Asn200 carries an N-linked (GlcNAc...) asparagine glycan. The Fe cation site is built by Asp221 and Tyr224. Asp221 lines the Zn(2+) pocket. Asn231 and Asn264 each carry an N-linked (GlcNAc...) asparagine glycan. Asn277 provides a ligand contact to Zn(2+). Substrate is bound at residue Asn277. N-linked (GlcNAc...) asparagine glycosylation is found at Asn286 and Asn301. His359 is a binding site for Zn(2+). Residue His369 is the Proton donor of the active site. Position 396 (His396) interacts with Zn(2+). 396–398 (HVH) is a substrate binding site. His398 provides a ligand contact to Fe cation. Residue Asn491 is glycosylated (N-linked (GlcNAc...) asparagine).

Belongs to the metallophosphoesterase superfamily. Purple acid phosphatase family. In terms of assembly, homodimer. Fe cation is required as a cofactor. Zn(2+) serves as cofactor. In terms of tissue distribution, expressed in roots, stems, cotyledons, leaves, flowers and siliques.

The protein localises to the secreted. The catalysed reaction is 1D-myo-inositol hexakisphosphate + H2O = 1D-myo-inositol 1,2,3,5,6-pentakisphosphate + phosphate. The enzyme catalyses a phosphate monoester + H2O = an alcohol + phosphate. In terms of biological role, acid phosphatase activity with p-nitrophenyl phosphate (pNPP), D-myoinositol 1-phosphate (Ins(1)P1), phytic acid and Myo-inositol hexakisphosphate. Low or no activity with Glc-6-P and ATP. Confers shoot growth stimulation, enhanced salt and osmotic stress tolerance, and ABA insensitivity. May modulate ascorbic acid (AsA) levels by controlling the input of myoinositol into this branch of AsA biosynthesis. The chain is Purple acid phosphatase 15 (PAP15) from Arabidopsis thaliana (Mouse-ear cress).